Here is a 346-residue protein sequence, read N- to C-terminus: Deoxyhypusine hydroxylase (346 aa).

HEAT-like PBS-type repeat units lie at residues 71-100, 104-133, 213-242, 246-275, and 279-320; these read VLLRHEVAYVIGQISNEKCNDILIKLLNDT, LMVRHEAAEGLAAIGSDSNIEVIKKFLNDE, LKLRYEALFKLRDMETDVSINALGEVLIKD, AIFRHEVAFVLGQALHLNSLKYLISSLQNV, and EMVR…SKDA. Residues histidine 75, histidine 108, and glutamate 109 each contribute to the Fe cation site. 3 residues coordinate Fe cation: histidine 250, histidine 283, and glutamate 284.

Belongs to the deoxyhypusine hydroxylase family. Fe(2+) serves as cofactor.

The catalysed reaction is [eIF5A protein]-deoxyhypusine + AH2 + O2 = [eIF5A protein]-hypusine + A + H2O. The protein operates within protein modification; eIF5A hypusination. Functionally, catalyzes the hydroxylation of the N(6)-(4-aminobutyl)-L-lysine intermediate produced by deoxyhypusine synthase/DHPS on a critical lysine of the eukaryotic translation initiation factor 5A/eIF-5A. This is the second step of the post-translational modification of that lysine into an unusual amino acid residue named hypusine. Hypusination is unique to mature eIF-5A factor and is essential for its function. The sequence is that of Deoxyhypusine hydroxylase from Plasmodium vivax (strain Salvador I).